Reading from the N-terminus, the 509-residue chain is Cobyric acid synthase (509 aa).

One can recognise a GATase cobBQ-type domain in the interval 262–459; that stretch reads EIKVGIIKLP…IHGIFENDSW (198 aa). Cysteine 343 (nucleophile) is an active-site residue. Histidine 451 is an active-site residue.

This sequence belongs to the CobB/CobQ family. CobQ subfamily.

Its pathway is cofactor biosynthesis; adenosylcobalamin biosynthesis. In terms of biological role, catalyzes amidations at positions B, D, E, and G on adenosylcobyrinic A,C-diamide. NH(2) groups are provided by glutamine, and one molecule of ATP is hydrogenolyzed for each amidation. This is Cobyric acid synthase from Prochlorococcus marinus (strain MIT 9215).